Consider the following 198-residue polypeptide: Ribosome maturation factor RimP (198 aa).

The protein belongs to the RimP family.

It is found in the cytoplasm. Its function is as follows. Required for maturation of 30S ribosomal subunits. This is Ribosome maturation factor RimP from Rhizobium etli (strain ATCC 51251 / DSM 11541 / JCM 21823 / NBRC 15573 / CFN 42).